The primary structure comprises 75 residues: Protein SlyX homolog (75 aa).

This sequence belongs to the SlyX family.

The protein is Protein SlyX homolog of Vibrio campbellii (strain ATCC BAA-1116).